The chain runs to 131 residues: Small ribosomal subunit protein uS11 (131 aa).

The protein belongs to the universal ribosomal protein uS11 family. In terms of assembly, part of the 30S ribosomal subunit. Interacts with proteins S7 and S18. Binds to IF-3.

Located on the platform of the 30S subunit, it bridges several disparate RNA helices of the 16S rRNA. Forms part of the Shine-Dalgarno cleft in the 70S ribosome. The polypeptide is Small ribosomal subunit protein uS11 (Cellvibrio japonicus (strain Ueda107) (Pseudomonas fluorescens subsp. cellulosa)).